We begin with the raw amino-acid sequence, 736 residues long: Gephyrin (736 aa).

Residues 14–153 (QIRVGVLTVS…LPGSKKGSQE (140 aa)) are MPT Mo-transferase. 2 disordered regions span residues 181–232 (DELE…DSSS) and 260–290 (TASL…PKVQ). Positions 187-199 (PSPPPPLSPPPTT) are enriched in pro residues. Positions 261-290 (ASLSTTPSESPRAQATSRLSTASCPTPKVQ) are enriched in polar residues. Residues 294-736 (SSKENILRAS…VVDVMVIGRL (443 aa)) form an MPT adenylyltransferase region.

The protein in the N-terminal section; belongs to the MoaB/Mog family. It in the C-terminal section; belongs to the MoeA family. Homotrimer, homodimer and homooligomer. Interacts with glycine receptors. Mg(2+) is required as a cofactor.

It localises to the postsynaptic cell membrane. The protein localises to the cell membrane. The protein resides in the cytoplasm. Its subcellular location is the cytosol. It is found in the cytoskeleton. It localises to the cell projection. The protein localises to the dendrite. The protein resides in the postsynaptic density. The enzyme catalyses molybdopterin + ATP + H(+) = adenylyl-molybdopterin + diphosphate. It catalyses the reaction adenylyl-molybdopterin + molybdate = Mo-molybdopterin + AMP + H(+). Its pathway is cofactor biosynthesis; molybdopterin biosynthesis. In terms of biological role, microtubule-associated protein involved in membrane protein-cytoskeleton interactions. It is thought to anchor the inhibitory glycine receptor (GLYR) to subsynaptic microtubules. Acts as a major instructive molecule at inhibitory synapses, where it also clusters GABA type A receptors. Its function is as follows. Also has a catalytic activity and catalyzes two steps in the biosynthesis of the molybdenum cofactor. In the first step, molybdopterin is adenylated. Subsequently, molybdate is inserted into adenylated molybdopterin and AMP is released. In Gallus gallus (Chicken), this protein is Gephyrin (GPHN).